The following is a 280-amino-acid chain: MVPWFLLSLLLLARPVPGVAYSVSLPASFLEDVAGSGEAEGSSASSPSLPPPGTPAFSPTPERPQPTALDGPVPPTNLLEGIMDFFRQYVMLIAVVGSLTFLIMFIVCAALITRQKHKATAYYPSSFPEKKYVDQRDRAGGPRTFSEVPDRAPDSRHEEGLDTSHQLQADILAATQNLRSPARALPGNGEGAKPVKGGSEEEEEEVLSGQEEAQEAPVCGVTEEKLGVPEESVSAEAEGVPATSEGQGEAEGSFSLAQESQGATGPPESPCACNRVSPSV.

The first 20 residues, 1-20, serve as a signal peptide directing secretion; that stretch reads MVPWFLLSLLLLARPVPGVA. Residues 21–91 are Extracellular-facing; it reads YSVSLPASFL…IMDFFRQYVM (71 aa). O-linked (Xyl...) (chondroitin sulfate) serine glycosylation is present at S36. Low complexity predominate over residues 38 to 47; the sequence is EAEGSSASSP. Residues 38-73 form a disordered region; the sequence is EAEGSSASSPSLPPPGTPAFSPTPERPQPTALDGPV. Residues 92–112 form a helical membrane-spanning segment; it reads LIAVVGSLTFLIMFIVCAALI. The Cytoplasmic segment spans residues 113–280; that stretch reads TRQKHKATAY…CACNRVSPSV (168 aa). 2 disordered regions span residues 133–162 and 181–280; these read VDQR…EGLD and PARA…SPSV. The span at 148–162 shows a compositional bias: basic and acidic residues; sequence VPDRAPDSRHEEGLD. S269 is modified (phosphoserine).

As to quaternary structure, interacts with SMAD1, SMAD5 and RUNX2. As to expression, expressed in spermatocytes and spermatids in the developing testis (at protein level). Expressed in the brain, heart, lung, spleen, skeletal muscle, ovary, testis and epididymis. Predominantly expressed in osteoblasts.

Its subcellular location is the cell membrane. It is found in the cytoplasm. It localises to the endoplasmic reticulum membrane. The protein resides in the secreted. Plays an important role in bone formation and normal bone mineralization. Promotes the differentiation of myoblasts into osteoblasts. May induce the commitment and differentiation of myoblasts into osteoblasts through an enhancement of BMP2 production and interaction with the BMP-RUNX2 pathway. Up-regulates the expression of ATF4 which plays a central role in osteoblast differentiation. Essential for normal spermatogenesis and late testicular differentiation. This chain is Transmembrane protein 119 (Tmem119), found in Mus musculus (Mouse).